We begin with the raw amino-acid sequence, 703 residues long: Glycine--tRNA ligase beta subunit (703 aa).

It belongs to the class-II aminoacyl-tRNA synthetase family. In terms of assembly, tetramer of two alpha and two beta subunits.

The protein localises to the cytoplasm. It catalyses the reaction tRNA(Gly) + glycine + ATP = glycyl-tRNA(Gly) + AMP + diphosphate. This chain is Glycine--tRNA ligase beta subunit, found in Myxococcus xanthus (strain DK1622).